An 858-amino-acid polypeptide reads, in one-letter code: MVNFTVDQIRAIMDKKANIRNMSVIAHVDHGKSTLTDSLVCKAGIIASARAGETRFTDTRKDEQERCITIKSTAISLFYELSENDLNFIKQSKDGSGFLINLIDSPGHVDFSSEVTAALRVTDGALVVVDCVSGVCVQTETVLRQAIAERIKPVLMMNKMDRALLELQLEPEELYQTFQRIVENVNVIISTYGEGESGPMGNIMIDPVLGTVGFGSGLHGWAFTLKQFAEMYVAKFAAKGEGQLGPAERAKKVEDMMKKLWGDRYFDPATGKFSKSANSPDGKKLPRTFCQLILDPIFKVFDAIMNFKKEETAKLIEKLDIKLDSEDKDKEGKPLLKAVMRRWLPAGDALLQMITIHLPSPVTAQKYRCELLYEGPPDDEAAMGIKSCDPKGPLMMYISKMVPTSDKGRFYAFGRVFSGLVSTGLKVRIMGPNYTPGKKEDLYLKPIQRTILMMGRYVEPIEDVPCGNIVGLVGVDQFLVKTGTITTFEHAHNMRVMKFSVSPVVRVAVEAKNPADLPKLVEGLKRLAKSDPMVQCIIEESGEHIIAGAGELHLEICLKDLEEDHACIPIKKSDPVVSYRETVSEESNVLCLSKSPNKHNRLYMKARPFPDGLAEDIDKGEVSARQELKQRARYLAEKYEWDVAEARKIWCFGPDGTGPNILTDITKGVQYLNEIKDSVVAGFQWATKEGALCEENMRGVRFDVHDVTLHADAIHRGGGQIIPTARRCLYASVLTAQPRLMEPIYLVEIQCPEQVVGGIYGVLNRKRGHVFEETQVAGTPMFVVKAYLPVNESFGFTADLRSNTGGQAFPQCVFDHWQILPGDPFDNTSRPSQVVAETRKRKGLKEGIPALDNFLDKL.

A tr-type G domain is found at Ala17–Val362. Ala26–Ser33 provides a ligand contact to GTP. Thr54 carries the post-translational modification Phosphothreonine. At Thr57 the chain carries Phosphothreonine; by EEF2K. Thr59 is subject to Phosphothreonine. Lys152 carries the N6-succinyllysine modification. GTP contacts are provided by residues Asn158–Asp161 and Ser216–Leu218. An N6-acetyllysine modification is found at Lys235. The residue at position 239 (Lys239) is an N6-acetyllysine; alternate. Lys239 is covalently cross-linked (Glycyl lysine isopeptide (Lys-Gly) (interchain with G-Cter in SUMO1); alternate). Residue Tyr265 is modified to Phosphotyrosine; by CSK. Lys272 bears the N6-acetyllysine; alternate mark. Residue Lys272 is modified to N6-succinyllysine; alternate. The residue at position 275 (Lys275) is an N6-acetyllysine. Lys322 participates in a covalent cross-link: Glycyl lysine isopeptide (Lys-Gly) (interchain with G-Cter in SUMO). Ser325 bears the Phosphoserine mark. The residue at position 373 (Tyr373) is a Phosphotyrosine; by CSK. A Phosphothreonine modification is found at Thr435. Lys439 and Lys445 each carry N6-acetyllysine. Residue Ser502 is modified to Phosphoserine. Lys525 carries the N6,N6,N6-trimethyllysine; by EEF2KMT modification. A Glycyl lysine isopeptide (Lys-Gly) (interchain with G-Cter in SUMO) cross-link involves residue Lys529. The residue at position 572 (Lys572) is an N6-succinyllysine. The residue at position 595 (Ser595) is a Phosphoserine; by CDK2. An N6-acetyllysine modification is found at Lys619. His715 bears the Diphthamide mark.

It belongs to the TRAFAC class translation factor GTPase superfamily. Classic translation factor GTPase family. EF-G/EF-2 subfamily. Binds to 80S ribosomes. Actively translating ribosomes show mutually exclusive binding of eIF5a (EIF5A or EIF5A2) and EEF2/eEF2. Interacts with SERBP1; interaction sequesters EEF2/eEF2 at the A-site of the ribosome, thereby blocking the interaction sites of the mRNA-tRNA complex, promoting ribosome stabilization and hibernation. Interacts with HABP4; interaction takes place at the A-site of hibernating ribosomes and promotes ribosome stabilization. Component of the mRNA surveillance SURF complex, at least composed of ERF1, ERF3 (ERF3A or ERF3B), EEF2, UPF1/RENT1, SMG1, SMG8 and SMG9. Interacts with RBPMS2. Post-translationally, phosphorylation by EF-2 kinase completely inactivates EF-2; it requires prior phosphorylation by CDK2 at Ser-595 during mitotic prometaphase. Phosphorylation by CSK promotes SUMOylation, proteolytic cleavage, and nuclear translocation if the C-terminal fragment. Diphthamide is 2-[3-carboxyamido-3-(trimethyl-ammonio)propyl]histidine. In terms of processing, ISGylated. Post-translationally, proteolytically processed at two sites following phosphorylation by CSK. SUMOylated following phosphorylation by CSK, promotes proteolytic cleavage.

It is found in the cytoplasm. The protein localises to the nucleus. It catalyses the reaction GTP + H2O = GDP + phosphate + H(+). Functionally, catalyzes the GTP-dependent ribosomal translocation step during translation elongation. During this step, the ribosome changes from the pre-translocational (PRE) to the post-translocational (POST) state as the newly formed A-site-bound peptidyl-tRNA and P-site-bound deacylated tRNA move to the P and E sites, respectively. Catalyzes the coordinated movement of the two tRNA molecules, the mRNA and conformational changes in the ribosome. This Bos taurus (Bovine) protein is Elongation factor 2 (EEF2).